The primary structure comprises 170 residues: Regulator of ribonuclease activity A (170 aa).

This sequence belongs to the RraA family. In terms of assembly, homotrimer. Binds to both RNA-binding sites in the C-terminal region of Rne and to RhlB.

The protein localises to the cytoplasm. Its function is as follows. Globally modulates RNA abundance by binding to RNase E (Rne) and regulating its endonucleolytic activity. Can modulate Rne action in a substrate-dependent manner by altering the composition of the degradosome. Modulates RNA-binding and helicase activities of the degradosome. This is Regulator of ribonuclease activity A from Psychromonas ingrahamii (strain DSM 17664 / CCUG 51855 / 37).